The following is a 366-amino-acid chain: tRNA-specific 2-thiouridylase MnmA (366 aa).

ATP contacts are provided by residues glycine 10–serine 17 and methionine 36. The interaction with target base in tRNA stretch occupies residues asparagine 96–aspartate 98. Cysteine 101 functions as the Nucleophile in the catalytic mechanism. A disulfide bridge connects residues cysteine 101 and cysteine 197. An ATP-binding site is contributed by glycine 125. The segment at lysine 147 to glutamine 149 is interaction with tRNA. Cysteine 197 (cysteine persulfide intermediate) is an active-site residue. The interaction with tRNA stretch occupies residues arginine 309–tyrosine 310.

This sequence belongs to the MnmA/TRMU family.

It is found in the cytoplasm. It carries out the reaction S-sulfanyl-L-cysteinyl-[protein] + uridine(34) in tRNA + AH2 + ATP = 2-thiouridine(34) in tRNA + L-cysteinyl-[protein] + A + AMP + diphosphate + H(+). Functionally, catalyzes the 2-thiolation of uridine at the wobble position (U34) of tRNA, leading to the formation of s(2)U34. The chain is tRNA-specific 2-thiouridylase MnmA from Alkalilimnicola ehrlichii (strain ATCC BAA-1101 / DSM 17681 / MLHE-1).